We begin with the raw amino-acid sequence, 184 residues long: Peptide deformylase (184 aa).

Residues C111 and H154 each coordinate Fe cation. E155 is a catalytic residue. H158 provides a ligand contact to Fe cation.

Belongs to the polypeptide deformylase family. It depends on Fe(2+) as a cofactor.

The enzyme catalyses N-terminal N-formyl-L-methionyl-[peptide] + H2O = N-terminal L-methionyl-[peptide] + formate. In terms of biological role, removes the formyl group from the N-terminal Met of newly synthesized proteins. Requires at least a dipeptide for an efficient rate of reaction. N-terminal L-methionine is a prerequisite for activity but the enzyme has broad specificity at other positions. This chain is Peptide deformylase, found in Macrococcus caseolyticus (strain JCSC5402) (Macrococcoides caseolyticum).